The primary structure comprises 184 residues: Mediator of RNA polymerase II transcription subunit 11 (184 aa).

Residues 142–152 (ATTKQETNINN) are compositionally biased toward polar residues. A disordered region spans residues 142-184 (ATTKQETNINNEDSEKEKQENITAIETKKESSENEDEDFDMIA). Residues 154 to 173 (DSEKEKQENITAIETKKESS) show a composition bias toward basic and acidic residues. Over residues 174-184 (ENEDEDFDMIA) the composition is skewed to acidic residues.

This sequence belongs to the Mediator complex subunit 11 family. In terms of assembly, component of the Mediator complex.

The protein resides in the nucleus. Component of the Mediator complex, a coactivator involved in the regulated transcription of nearly all RNA polymerase II-dependent genes. Mediator functions as a bridge to convey information from gene-specific regulatory proteins to the basal RNA polymerase II transcription machinery. Mediator is recruited to promoters by direct interactions with regulatory proteins and serves as a scaffold for the assembly of a functional pre-initiation complex with RNA polymerase II and the general transcription factors. In Debaryomyces hansenii (strain ATCC 36239 / CBS 767 / BCRC 21394 / JCM 1990 / NBRC 0083 / IGC 2968) (Yeast), this protein is Mediator of RNA polymerase II transcription subunit 11 (MED11).